We begin with the raw amino-acid sequence, 336 residues long: Ribosomal RNA large subunit methyltransferase F (336 aa).

Positions 212–231 (HHLERSRGKPTGKGVRRVRS) are enriched in basic residues. The tract at residues 212 to 234 (HHLERSRGKPTGKGVRRVRSGRM) is disordered.

Belongs to the methyltransferase superfamily. METTL16/RlmF family.

The protein localises to the cytoplasm. The catalysed reaction is adenosine(1618) in 23S rRNA + S-adenosyl-L-methionine = N(6)-methyladenosine(1618) in 23S rRNA + S-adenosyl-L-homocysteine + H(+). Functionally, specifically methylates the adenine in position 1618 of 23S rRNA. This chain is Ribosomal RNA large subunit methyltransferase F, found in Methylobacillus flagellatus (strain ATCC 51484 / DSM 6875 / VKM B-1610 / KT).